The chain runs to 114 residues: Large ribosomal subunit protein bL20 (114 aa).

Belongs to the bacterial ribosomal protein bL20 family.

Its function is as follows. Binds directly to 23S ribosomal RNA and is necessary for the in vitro assembly process of the 50S ribosomal subunit. It is not involved in the protein synthesizing functions of that subunit. This is Large ribosomal subunit protein bL20 from Parabacteroides distasonis (strain ATCC 8503 / DSM 20701 / CIP 104284 / JCM 5825 / NCTC 11152).